The following is a 426-amino-acid chain: UPF0164 protein TP_0548 (426 aa).

The N-terminal stretch at 1–37 is a signal peptide; that stretch reads MISCSVRRRPRWEPQVGAAFLAFALLPVLASGRGMQA.

It belongs to the UPF0164 family.

The protein is UPF0164 protein TP_0548 of Treponema pallidum (strain Nichols).